Consider the following 164-residue polypeptide: C-type lectin 1 (164 aa).

Positions 1–23 (MGRFLFASLGLLVVAFSLSGTGA) are cleaved as a signal peptide. Cystine bridges form between cysteine 27-cysteine 38, cysteine 55-cysteine 154, and cysteine 129-cysteine 146. The 122-residue stretch at 34 to 155 (YNVSCYKLFY…CTLLHPFLCQ (122 aa)) folds into the C-type lectin domain. Residues asparagine 35 and asparagine 109 are each glycosylated (N-linked (GlcNAc...) asparagine). Positions 119–121 (EPN) match the Mannose-binding motif. Positions 127, 142, and 143 each coordinate Ca(2+).

It belongs to the true venom lectin family. As to expression, expressed by the venom gland.

The protein localises to the secreted. Mannose-binding lectin which recognizes specific carbohydrate structures and agglutinates a variety of animal cells by binding to cell-surface glycoproteins and glycolipids. May be a calcium-dependent lectin. This chain is C-type lectin 1, found in Hydrophis hardwickii (Hardwick's spine-bellied seasnake).